The following is a 444-amino-acid chain: L-cysteine:1D-myo-inositol 2-amino-2-deoxy-alpha-D-glucopyranoside ligase (444 aa).

C66 lines the Zn(2+) pocket. Residues 66–69, T81, and 104–106 each bind L-cysteinyl-5'-AMP; these read CGIT and NVT. Residues 68–78 carry the 'HIGH' region motif; that stretch reads ITPYDATHLGH. Positions 206-211 match the 'ERGGDP' region motif; the sequence is EHGGDP. W246 provides a ligand contact to L-cysteinyl-5'-AMP. A Zn(2+)-binding site is contributed by C250. 268–270 is a binding site for L-cysteinyl-5'-AMP; it reads GSD. Residue H275 coordinates Zn(2+). V302 provides a ligand contact to L-cysteinyl-5'-AMP. The short motif at 308-312 is the 'KMSKS' region element; sequence KMSKS.

The protein belongs to the class-I aminoacyl-tRNA synthetase family. MshC subfamily. As to quaternary structure, monomer. The cofactor is Zn(2+).

It carries out the reaction 1D-myo-inositol 2-amino-2-deoxy-alpha-D-glucopyranoside + L-cysteine + ATP = 1D-myo-inositol 2-(L-cysteinylamino)-2-deoxy-alpha-D-glucopyranoside + AMP + diphosphate + H(+). Its function is as follows. Catalyzes the ATP-dependent condensation of GlcN-Ins and L-cysteine to form L-Cys-GlcN-Ins. The chain is L-cysteine:1D-myo-inositol 2-amino-2-deoxy-alpha-D-glucopyranoside ligase from Parafrankia sp. (strain EAN1pec).